Consider the following 382-residue polypeptide: Pyrimidine monooxygenase RutA (382 aa).

FMN contacts are provided by residues 68-69 (IK), Asn134, Glu143, 159-160 (RY), and Ser209.

It belongs to the NtaA/SnaA/DszA monooxygenase family. RutA subfamily.

The catalysed reaction is uracil + FMNH2 + NADH + O2 = (Z)-3-ureidoacrylate + FMN + NAD(+) + H2O + H(+). It catalyses the reaction thymine + FMNH2 + NADH + O2 = (Z)-2-methylureidoacrylate + FMN + NAD(+) + H2O + H(+). Catalyzes the pyrimidine ring opening between N-3 and C-4 by an unusual flavin hydroperoxide-catalyzed mechanism, adding oxygen atoms in the process to yield ureidoacrylate peracid, that immediately reacts with FMN forming ureidoacrylate and FMN-N(5)-oxide. The FMN-N(5)-oxide reacts spontaneously with NADH to produce FMN. Requires the flavin reductase RutF to regenerate FMN in vivo. The sequence is that of Pyrimidine monooxygenase RutA from Escherichia coli (strain B / BL21-DE3).